Reading from the N-terminus, the 360-residue chain is MAGNSIGQLFKVTTFGESHGIALGCIVDGVPPNMELSEADLQPDLDRRKPGTSRYTTPRREDDEVQILSGVFEGKTTGTSIGLIIKNGDQRSKDYGDIMDKFRPGHADYTYQQKYGIRDYRGGGRSSARETAMRVAAGAIAKKYLKEQFGVEIRGYLSQIGSVKIDPQTVANIEQIDWQQVNSNPFFCPDPVAVEQFDELIRELKKEGNSIGAKLTVIAENVPVGLGEPVFDRLDADLAHALMSINAVKGVEIGDGFAAVEQKGSEHRDEMTPEGFCSNHSGGILGGISSGQPIIAHIALKPTSSITVPGKSVNVHNEPVEVVTKGRHDPCVGIRAVPIAEAMMAIVVLDHLLRFKAQCR.

Residues Arg48 and Arg54 each contribute to the NADP(+) site. Residues 125-127, 246-247, Gly286, 301-305, and Arg327 each bind FMN; these read RSS, NA, and KPTSS.

It belongs to the chorismate synthase family. Homotetramer. The cofactor is FMNH2.

The enzyme catalyses 5-O-(1-carboxyvinyl)-3-phosphoshikimate = chorismate + phosphate. It participates in metabolic intermediate biosynthesis; chorismate biosynthesis; chorismate from D-erythrose 4-phosphate and phosphoenolpyruvate: step 7/7. Its function is as follows. Catalyzes the anti-1,4-elimination of the C-3 phosphate and the C-6 proR hydrogen from 5-enolpyruvylshikimate-3-phosphate (EPSP) to yield chorismate, which is the branch point compound that serves as the starting substrate for the three terminal pathways of aromatic amino acid biosynthesis. This reaction introduces a second double bond into the aromatic ring system. The sequence is that of Chorismate synthase from Glaesserella parasuis serovar 5 (strain SH0165) (Haemophilus parasuis).